The chain runs to 234 residues: Sugar fermentation stimulation protein A (234 aa).

The H-T-H motif DNA-binding region spans 201-220 (LLSEAQNKGVEVLAYKAELS).

Belongs to the SfsA family.

In terms of biological role, binds to DNA non-specifically. Could be a regulatory factor involved in maltose metabolism. In Salmonella arizonae (strain ATCC BAA-731 / CDC346-86 / RSK2980), this protein is Sugar fermentation stimulation protein A.